Consider the following 211-residue polypeptide: Dual specificity protein phosphatase 26 (211 aa).

The region spanning 60–207 (NHADEVWPGL…LLALDRRLRQ (148 aa)) is the Tyrosine-protein phosphatase domain. The Phosphocysteine intermediate role is filled by Cys-152.

The protein belongs to the protein-tyrosine phosphatase family. Non-receptor class dual specificity subfamily. In terms of assembly, interacts with HSF4. Brain and skeletal muscle. In the brain it is expressed ubiquitously except in the hippocampus.

The protein localises to the cytoplasm. The protein resides in the nucleus. Its subcellular location is the golgi apparatus. The enzyme catalyses O-phospho-L-tyrosyl-[protein] + H2O = L-tyrosyl-[protein] + phosphate. The catalysed reaction is O-phospho-L-seryl-[protein] + H2O = L-seryl-[protein] + phosphate. It carries out the reaction O-phospho-L-threonyl-[protein] + H2O = L-threonyl-[protein] + phosphate. Functionally, inactivates MAPK1 and MAPK3 which leads to dephosphorylation of heat shock factor protein 4 and a reduction in its DNA-binding activity. The polypeptide is Dual specificity protein phosphatase 26 (Dusp26) (Mus musculus (Mouse)).